A 446-amino-acid polypeptide reads, in one-letter code: Probable glycine dehydrogenase (decarboxylating) subunit 1 (446 aa).

The protein belongs to the GcvP family. N-terminal subunit subfamily. In terms of assembly, the glycine cleavage system is composed of four proteins: P, T, L and H. In this organism, the P 'protein' is a heterodimer of two subunits.

It carries out the reaction N(6)-[(R)-lipoyl]-L-lysyl-[glycine-cleavage complex H protein] + glycine + H(+) = N(6)-[(R)-S(8)-aminomethyldihydrolipoyl]-L-lysyl-[glycine-cleavage complex H protein] + CO2. Functionally, the glycine cleavage system catalyzes the degradation of glycine. The P protein binds the alpha-amino group of glycine through its pyridoxal phosphate cofactor; CO(2) is released and the remaining methylamine moiety is then transferred to the lipoamide cofactor of the H protein. This chain is Probable glycine dehydrogenase (decarboxylating) subunit 1, found in Protochlamydia amoebophila (strain UWE25).